Consider the following 436-residue polypeptide: Bifunctional IPC transferase and DIPP synthase (436 aa).

Residues 11-241 (GVGAAVLAAG…LSEEMVLGWA (231 aa)) form a mobA-like NTP transferase region. Residues 17–19 (LAA) and Lys-32 each bind CTP. The CDP-alcohol phosphatidyltransferases stretch occupies residues 242–435 (ASGNDGPVSR…RRLLALKRGR (194 aa)). A run of 3 helical transmembrane segments spans residues 275 to 295 (VSLLSFALAALGAGLLAAGRL), 349 to 371 (AGTRLAAAAGYPALAGALLVSYT), and 397 to 417 (LAVLALGGLLGAPGAALLATG).

This sequence in the N-terminal section; belongs to the MobA family. The protein in the C-terminal section; belongs to the CDP-alcohol phosphatidyltransferase class-I family.

The protein localises to the membrane. The catalysed reaction is 1D-myo-inositol 3-phosphate + CTP + H(+) = CDP-1L-myo-inositol + diphosphate. It catalyses the reaction CDP-1L-myo-inositol + 1D-myo-inositol 3-phosphate = bis(1L-myo-inositol) 3,1'-phosphate 1-phosphate + CMP + H(+). Involved in biosynthesis of di-myo-inositol phosphate (DIP), a widespread organic solute in microorganisms adapted to hot environments. Catalyzes the condensation of CTP and L-myo-inositol-1-phosphate into CDP-L-myo-inositol, as well as the biosynthesis of di-myo-inositol-1,3'-phosphate-1'-phosphate (DIPP) from CDP-L-myo-inositol and L-myo-inositol-1-phosphate. The sequence is that of Bifunctional IPC transferase and DIPP synthase from Rubrobacter xylanophilus (strain DSM 9941 / JCM 11954 / NBRC 16129 / PRD-1).